A 67-amino-acid chain; its full sequence is Surface composition regulator (67 aa).

Belongs to the GlgS family.

Major determinant of cell surface composition. Negatively regulates motility, adhesion and synthesis of biofilm exopolysaccharides. This is Surface composition regulator from Salmonella paratyphi A (strain ATCC 9150 / SARB42).